A 462-amino-acid polypeptide reads, in one-letter code: Argininosuccinate lyase (462 aa).

It belongs to the lyase 1 family. Argininosuccinate lyase subfamily.

The protein resides in the cytoplasm. It carries out the reaction 2-(N(omega)-L-arginino)succinate = fumarate + L-arginine. It participates in amino-acid biosynthesis; L-arginine biosynthesis; L-arginine from L-ornithine and carbamoyl phosphate: step 3/3. In Streptococcus agalactiae serotype III (strain NEM316), this protein is Argininosuccinate lyase.